A 452-amino-acid polypeptide reads, in one-letter code: Phosphoglucosamine mutase (452 aa).

S105 functions as the Phosphoserine intermediate in the catalytic mechanism. Positions 105, 244, 246, and 248 each coordinate Mg(2+). The residue at position 105 (S105) is a Phosphoserine.

This sequence belongs to the phosphohexose mutase family. It depends on Mg(2+) as a cofactor. Post-translationally, activated by phosphorylation.

The catalysed reaction is alpha-D-glucosamine 1-phosphate = D-glucosamine 6-phosphate. Functionally, catalyzes the conversion of glucosamine-6-phosphate to glucosamine-1-phosphate. The polypeptide is Phosphoglucosamine mutase (Blochmanniella floridana).